We begin with the raw amino-acid sequence, 426 residues long: Glucan 1,3-beta-glucosidase (426 aa).

The signal sequence occupies residues 1-20; sequence MLYPRALLPAAVALASLVLA. Glu208 serves as the catalytic Proton donor. Cystine bridges form between Cys290/Cys416 and Cys315/Cys343. Catalysis depends on Glu307, which acts as the Nucleophile.

The protein belongs to the glycosyl hydrolase 5 (cellulase A) family.

The protein localises to the secreted. The catalysed reaction is Successive hydrolysis of beta-D-glucose units from the non-reducing ends of (1-&gt;3)-beta-D-glucans, releasing alpha-glucose.. Functionally, beta-glucanases participate in the metabolism of beta-glucan, the main structural component of the cell wall. It could also function biosynthetically as a transglycosylase. This is Glucan 1,3-beta-glucosidase from Blumeria graminis (Powdery mildew).